The sequence spans 587 residues: Probable pectinesterase/pectinesterase inhibitor 61 (587 aa).

The disordered stretch occupies residues methionine 1 to leucine 23. Positions glycine 10–proline 19 are enriched in polar residues. Residues isoleucine 35 to isoleucine 55 form a helical membrane-spanning segment. Residues arginine 69–isoleucine 223 form a pectinesterase inhibitor 61 region. The segment at aspartate 273–serine 571 is pectinesterase 61. Substrate is bound by residues threonine 349 and glutamine 379. Residue aspartate 402 is the Proton donor; for pectinesterase activity of the active site. Cysteine 416 and cysteine 436 are oxidised to a cystine. Aspartate 423 functions as the Nucleophile; for pectinesterase activity in the catalytic mechanism. Arginine 491 and tryptophan 493 together coordinate substrate.

In the N-terminal section; belongs to the PMEI family. The protein in the C-terminal section; belongs to the pectinesterase family. Expressed in siliques, floral stems and rosettes leaves.

It localises to the membrane. The catalysed reaction is [(1-&gt;4)-alpha-D-galacturonosyl methyl ester](n) + n H2O = [(1-&gt;4)-alpha-D-galacturonosyl](n) + n methanol + n H(+). The protein operates within glycan metabolism; pectin degradation; 2-dehydro-3-deoxy-D-gluconate from pectin: step 1/5. Functionally, acts in the modification of cell walls via demethylesterification of cell wall pectin. This is Probable pectinesterase/pectinesterase inhibitor 61 (PME61) from Arabidopsis thaliana (Mouse-ear cress).